The chain runs to 633 residues: ATP-dependent rRNA helicase SPB4 (633 aa).

Residues 11–39 (FSALTPALSEWIIDAVDAMGFVKTTPVQH) carry the Q motif motif. The 212-residue stretch at 42 to 253 (IPMFMKNSDV…RVGLRNPVRI (212 aa)) folds into the Helicase ATP-binding domain. Residue 55-62 (AVTGSGKT) participates in ATP binding. The segment covering 119 to 131 (EPDDEDTDMEDAD) has biased composition (acidic residues). The tract at residues 119 to 140 (EPDDEDTDMEDADTPPKPTFPP) is disordered. Positions 201 to 204 (DEAD) match the DEAD box motif. Residues 292 to 446 (AMKKILSSLQ…EITVTDEDAK (155 aa)) form the Helicase C-terminal domain. Positions 530-629 (AYKDKAREKL…KQEAEDADFE (100 aa)) form a coiled coil. Composition is skewed to basic and acidic residues over residues 547–581 (DKEE…EVRR) and 588–623 (REHE…KQEA). A disordered region spans residues 547-633 (DKEEGTKKKQ…EDADFEGFSD (87 aa)). The segment covering 624-633 (EDADFEGFSD) has biased composition (acidic residues).

The protein belongs to the DEAD box helicase family. DDX55/SPB4 subfamily. Component of pre-60S ribosomal complexes.

Its subcellular location is the nucleus. The protein localises to the nucleolus. It catalyses the reaction ATP + H2O = ADP + phosphate + H(+). In terms of biological role, ATP-binding RNA helicase involved in the biogenesis of 60S ribosomal subunits. Binds 90S pre-ribosomal particles and dissociates from pre-60S ribosomal particles after processing of 27SB pre-rRNA. Required for the normal formation of 18S rRNA through the processing of pre-rRNAs at sites A0, A1 and A2, and the normal formation of 25S and 5.8S rRNAs through the processing of pre-rRNAs at sites C1 and C2. The chain is ATP-dependent rRNA helicase SPB4 from Phaeosphaeria nodorum (strain SN15 / ATCC MYA-4574 / FGSC 10173) (Glume blotch fungus).